Consider the following 675-residue polypeptide: tRNA 5-methylaminomethyl-2-thiouridine biosynthesis bifunctional protein MnmC (675 aa).

Residues 1–245 (MANLPIQHAS…KREMLSGLLP (245 aa)) form a tRNA (mnm(5)s(2)U34)-methyltransferase region. Residues 271-675 (IGGGIASVLT…LLKGKPVTHD (405 aa)) form an FAD-dependent cmnm(5)s(2)U34 oxidoreductase region.

It in the N-terminal section; belongs to the methyltransferase superfamily. tRNA (mnm(5)s(2)U34)-methyltransferase family. This sequence in the C-terminal section; belongs to the DAO family. It depends on FAD as a cofactor.

It is found in the cytoplasm. The enzyme catalyses 5-aminomethyl-2-thiouridine(34) in tRNA + S-adenosyl-L-methionine = 5-methylaminomethyl-2-thiouridine(34) in tRNA + S-adenosyl-L-homocysteine + H(+). Catalyzes the last two steps in the biosynthesis of 5-methylaminomethyl-2-thiouridine (mnm(5)s(2)U) at the wobble position (U34) in tRNA. Catalyzes the FAD-dependent demodification of cmnm(5)s(2)U34 to nm(5)s(2)U34, followed by the transfer of a methyl group from S-adenosyl-L-methionine to nm(5)s(2)U34, to form mnm(5)s(2)U34. The chain is tRNA 5-methylaminomethyl-2-thiouridine biosynthesis bifunctional protein MnmC from Pectobacterium atrosepticum (strain SCRI 1043 / ATCC BAA-672) (Erwinia carotovora subsp. atroseptica).